The sequence spans 559 residues: MSMLKDPSSKYRAFPVINLPDRTWPSKTIDAAPIWCSSDLRDGNQSLIEPMDAVKKLRFWKTLVQVGVKEIEASFPAASQTDFDFVRTLIEDGHIPDDTTIQVLTQGREDLIERTFESLRGAKKAIVHLYNATSPSFRRIVFNQDKDGIKAIAVNAAKLFVKYAAMQPDTEWTFEYSPETFSATELEFAKEVCDAVIEVWNPTPEHKIILNLPATVECATPNVYADQIEWFHRNINRRDSVIISLHTHNDRGTGVAATELGLMAGADRVEGCLFGNGERTGNVDLVTVALNMYTQGINPDLDFSDIDGVRKVVEECNQIQVHPRHPYVGDLVHTAFSGSHQDAIRKGFAQQKPDTLWEVPYLPIDPADIGRSYEAVIRVNSQSGKGGIAYLLEQEYGISLPRRMQIEFSQVVQRETDRLGLEMTAQQIHALLHSEYLQANTPYALVSHRLQEENGNSAVEVEVASKGQGETNLHWRGKGNGALEALVAGLPIPVEIMDYNEHAIGAGTNAKAAAYIELRVNGERAVHGVGIDENITTASFKALFSALNRSLSQPEAKAA.

In terms of domain architecture, Pyruvate carboxyltransferase spans 33–307 (PIWCSSDLRD…NPDLDFSDID (275 aa)). Residues D42, H246, H248, and N282 each contribute to the Mg(2+) site. Residues 439 to 559 (ANTPYALVSH…SLSQPEAKAA (121 aa)) are regulatory domain.

The protein belongs to the alpha-IPM synthase/homocitrate synthase family. LeuA type 2 subfamily. Homodimer. Mg(2+) serves as cofactor.

The protein resides in the cytoplasm. The catalysed reaction is 3-methyl-2-oxobutanoate + acetyl-CoA + H2O = (2S)-2-isopropylmalate + CoA + H(+). Its pathway is amino-acid biosynthesis; L-leucine biosynthesis; L-leucine from 3-methyl-2-oxobutanoate: step 1/4. Its function is as follows. Catalyzes the condensation of the acetyl group of acetyl-CoA with 3-methyl-2-oxobutanoate (2-ketoisovalerate) to form 3-carboxy-3-hydroxy-4-methylpentanoate (2-isopropylmalate). This chain is 2-isopropylmalate synthase, found in Pseudomonas fluorescens (strain Pf0-1).